The primary structure comprises 224 residues: Cytidylate kinase (224 aa).

12 to 20 (GPSGAGKGT) is an ATP binding site.

This sequence belongs to the cytidylate kinase family. Type 1 subfamily.

It localises to the cytoplasm. The catalysed reaction is CMP + ATP = CDP + ADP. It carries out the reaction dCMP + ATP = dCDP + ADP. The polypeptide is Cytidylate kinase (Aliivibrio salmonicida (strain LFI1238) (Vibrio salmonicida (strain LFI1238))).